Here is a 315-residue protein sequence, read N- to C-terminus: MINNQTQEALYLDFDRARWAELRNSVPLTLSEADLTRLRGINERISLSEVTDIYLPLSRLLNLIVGARQQRGLVLNQFLGNKQPDSPYVISIAGSVAVGKSTTARILQALLKQWPEHPKVDLVTTDGFLYPLTELKRKGLLQRKGFPESYDTKMLIDFVSAVKSGAERVEVPLYSHIIYDRLPYERQVIQKPDILILEGLNVLQTGLDSPVDIRRPFVSDFVDFSIYVDADESLLKSWYIERFLQFRSSAFADENSYFRHYASLNDTQATETASQIWDGINGPNLRMNIQPTRERAHLILRKGADHLMNRVLLRK.

ATP is bound at residue 94 to 101; the sequence is GSVAVGKS.

It belongs to the prokaryotic pantothenate kinase family.

It is found in the cytoplasm. The enzyme catalyses (R)-pantothenate + ATP = (R)-4'-phosphopantothenate + ADP + H(+). Its pathway is cofactor biosynthesis; coenzyme A biosynthesis; CoA from (R)-pantothenate: step 1/5. The polypeptide is Pantothenate kinase (Shewanella amazonensis (strain ATCC BAA-1098 / SB2B)).